The sequence spans 139 residues: Actin-depolymerizing factor 3 (139 aa).

The ADF-H domain occupies 5 to 139; the sequence is ASGMAVHDDC…DLDVFKSRAN (135 aa). Ser-6 is modified (phosphoserine).

This sequence belongs to the actin-binding proteins ADF family.

Its subcellular location is the cytoplasm. It localises to the cytoskeleton. Its function is as follows. Actin-depolymerizing protein. Severs actin filaments (F-actin) and binds to actin monomers. This Arabidopsis thaliana (Mouse-ear cress) protein is Actin-depolymerizing factor 3 (ADF3).